The chain runs to 130 residues: Large ribosomal subunit protein bL17 (130 aa).

Belongs to the bacterial ribosomal protein bL17 family. As to quaternary structure, part of the 50S ribosomal subunit. Contacts protein L32.

The protein is Large ribosomal subunit protein bL17 of Azotobacter vinelandii (strain DJ / ATCC BAA-1303).